Consider the following 405-residue polypeptide: Tryptophan synthase beta chain (405 aa).

N6-(pyridoxal phosphate)lysine is present on K95.

The protein belongs to the TrpB family. In terms of assembly, tetramer of two alpha and two beta chains. Requires pyridoxal 5'-phosphate as cofactor.

It carries out the reaction (1S,2R)-1-C-(indol-3-yl)glycerol 3-phosphate + L-serine = D-glyceraldehyde 3-phosphate + L-tryptophan + H2O. It participates in amino-acid biosynthesis; L-tryptophan biosynthesis; L-tryptophan from chorismate: step 5/5. The beta subunit is responsible for the synthesis of L-tryptophan from indole and L-serine. This Pseudomonas putida (strain ATCC 700007 / DSM 6899 / JCM 31910 / BCRC 17059 / LMG 24140 / F1) protein is Tryptophan synthase beta chain.